The sequence spans 356 residues: Fructose import permease protein FruF (356 aa).

Helical transmembrane passes span 25 to 45 (IVAFILLVIICTIFQHDFLAL), 77 to 97 (LVISTAGIDLSVGSVMAVAGA), 113 to 133 (ILIALAVGLAIGCVNGALVSF), 180 to 200 (FILGIPANFVIAVIIVILVGL), 231 to 251 (ILFLVYAISGFLAAIAGLFAT), 268 to 290 (MYAILAVVIGGTSLLGGKFSLAG), and 308 to 328 (LGVNAEATPAFFAVVVIVICV).

The protein belongs to the binding-protein-dependent transport system permease family. The complex is composed of an ATP-binding protein (FruK), two transmembrane proteins (FruF and FruG) and a solute-binding protein (FruE).

The protein localises to the cell membrane. Part of the high-affinity ABC transporter complex FruEKFG involved in fructose uptake. Can also transport ribose and xylose, with lower affinity. Probably responsible for the translocation of the substrate across the membrane. This Bifidobacterium longum (strain NCC 2705) protein is Fructose import permease protein FruF.